A 156-amino-acid polypeptide reads, in one-letter code: Peroxisome assembly protein 22 (156 aa).

The helical transmembrane segment at 24-46 (LSIIAVGVLSTVAVTVGYLLYLY) threads the bilayer.

It belongs to the peroxin-22 family.

The protein resides in the peroxisome membrane. Its function is as follows. Involved in peroxisome biogenesis. This Kluyveromyces lactis (strain ATCC 8585 / CBS 2359 / DSM 70799 / NBRC 1267 / NRRL Y-1140 / WM37) (Yeast) protein is Peroxisome assembly protein 22 (PEX22).